The following is a 398-amino-acid chain: Streptopain (398 aa).

A signal peptide spans 1–27; the sequence is MNKKKLGVRLLSLLALGGFVLANPVFA. Positions 28 to 145 are excised as a propeptide; it reads DQNFARNEKE…TTYAGTAEIK (118 aa). Cys-192 (nucleophile) is an active-site residue. The residue at position 192 (Cys-192) is a Cysteine methyl disulfide; in zymogen form. Residues Ser-282 and Gly-339 each coordinate a protein. His-340 acts as the Proton acceptor in catalysis. The interval 368–390 is C-terminal active site loop; it reads RLDALNPSALGTGGGAGGFNGYQ.

This sequence belongs to the peptidase C10 family. As to quaternary structure, monomer. Post-translationally, the mature protease is derived from the precursor sequence by cleavage, either in cis via an autocatalytic mechanism, or in trans by mature SpeB or host proteases (trypsin, plasmin or subtilisin). Maturation can involve a number of protein cleavage intermediates. Mature SpeB probably plays the most important role in protein maturation in physiological conditions. Methylthiolation at Cys-192 of the inactive zymogen form is probably involved in the mechanism of secretion of the proteinase into the culture fluid.

The protein localises to the secreted. It is found in the host extracellular space. The protein resides in the host cytoplasm. It catalyses the reaction Preferential cleavage with hydrophobic residues at P2, P1 and P1'.. Its activity is regulated as follows. Synthesized as an inactive zymogen to protect the intracellular components of the bacteria from proteolytic activity during protein production. Once secreted into the extracellular milieu, cleaved into the active protease: maturation can be mediated in cis by autocatalytic cleavage, or in trans by mature SpeB or host proteases. Protease activity is strongly inhibited by zinc and copper, which prevent its maturation into an active protease: inhibition by metal ions may be required to prevent proteolysis of streptococcal proteins. Functionally, cysteine protease that acts as a key streptococcal virulence factor by cleaving host proteins involved in immune response. Triggers inflammation by mediating cleavage of host proteins, which can both promote host pathogenesis by triggering sterile inflammation and/or restrict streptococcal infection, depending on host immune statue and infection site. Cleaves host gasdermin-A (GSDMA) in epithelial cells, promoting GSDMA activation and formation of gasdermin pores, triggering pyroptosis. Pyroptosis triggers the elimination of the infected skin cell, depriving the pathogen of its protective niche, while inducing an inflammatory response. This ultimately prevents bacterial penetration of the epithelial barrier and a subsequent systemic dissemination of the pathogen. Also mediates cleavage of the cytokine precursor interleukin-1 beta (IL1B) to its mature form, resulting in inflammation and septic shock. SpeB-mediated maturation of IL1B plays a dual role depending on infection site: while IL1B inflammatory response prevents bacterial growth during invasive skin infections, it promotes streptococcal infection of the nasopharynx by disrupting colonization resistance mediated by the microbiota. Inhibits host autophagy be catalyzing cleavage and inactivation of key autophagy factors, such as CALCOCO2, NBR1 and SQSTM1. Cleaves and inhibits a number of complement factors, such as C2, C3-beta chain of C3, C4, C5 or SERPING1, thereby promoting evasion of host immunity. May also impair adaptive immunity by catalyzing cleavage and degradation of host immunoglobulins to promote immune system evasion; the relevance of this activity is however unsure in vivo. Catalyzes maturation and release of the peptide hormone bradykinin from the precursor Kininogen-1 (KNG1) to produce hypotension during septic shock. Also involved in bacterial translocation across the host epithelial barrier by mediating cleavage and degradation of host epithelial junction proteins, such as CDH1 and OCLN. Additionally, has been involved in degradation of fibronectin and vitronectin, two host extracellular matrix proteins involved in tissue integrity. Also able to catalyze cleavage and degradation of streptococcal proteins, such as C5a peptidase, EndoS or SmeZ. Degradation of streptococcal proteins is however strictly regulated to preserve integrity of other virulence factors. This is Streptopain from Streptococcus pyogenes serotype M1.